The following is a 1171-amino-acid chain: Structural maintenance of chromosomes protein 2-2 (1171 aa).

One can recognise a Zinc-hook domain in the interval 2 to 1158 (HIKEICLEGF…DVLFRTKFVD (1157 aa)). 32–39 (GLNGSGKS) contacts ATP. A coiled-coil region spans residues 172–510 (RMYENKKEAA…LANVQFTYRD (339 aa)). An SMC hinge domain is found at 518-635 (SKVKGVVAKL…KTTDAAKEVA (118 aa)). A coiled-coil region spans residues 674 to 1026 (HDLAEAETKF…LDEKKKETLK (353 aa)).

This sequence belongs to the SMC family. SMC2 subfamily. Forms a heterodimer with SMC4. Component of the condensin complex, which contains the SMC2 and SMC4 heterodimer, and three non SMC subunits that probably regulate the complex: CAPH, CAPD2 and CAPG. As to expression, highly expressed in roots and young floral buds.

The protein resides in the nucleus. In terms of biological role, central component of the condensin complex, a complex required for conversion of interphase chromatin into mitotic-like condense chromosomes. The condensin complex probably introduces positive supercoils into relaxed DNA in the presence of type I topoisomerases and converts nicked DNA into positive knotted forms in the presence of type II topoisomerases. Also involved in chromosome segregation in meiosis. This Arabidopsis thaliana (Mouse-ear cress) protein is Structural maintenance of chromosomes protein 2-2 (SMC2-2).